The primary structure comprises 449 residues: Probable glycosyltransferase 5 (449 aa).

A compositionally biased stretch (basic and acidic residues) spans 1-14 (MMEKHGGKVTSDRR). Residues 1–24 (MMEKHGGKVTSDRRAGRRQHGQRC) are disordered. The Cytoplasmic segment spans residues 1–28 (MMEKHGGKVTSDRRAGRRQHGQRCSASD). The helical; Signal-anchor for type II membrane protein transmembrane segment at 29 to 49 (AAPLVVVVILIVGALFLILGP) threads the bilayer. At 50–449 (TGSSSFTVPR…HPTFRAARPT (400 aa)) the chain is on the lumenal side. Positions 74 to 109 (APPPPPPPAQMQAGANASSEEDSGLPPPRQLTDPPY) are disordered. N-linked (GlcNAc...) asparagine glycans are attached at residues Asn-89, Asn-413, and Asn-422.

Belongs to the glycosyltransferase 34 family.

The protein localises to the golgi apparatus membrane. Functionally, probable glycosyltransferase that may be involved in the biosynthesis of xyloglucan. The polypeptide is Probable glycosyltransferase 5 (Oryza sativa subsp. indica (Rice)).